The sequence spans 407 residues: Betaine--homocysteine S-methyltransferase 1 (407 aa).

Residues 11–314 (KGILERLNAG…YHIRAIAEEL (304 aa)) enclose the Hcy-binding domain. Residues Lys-40, Lys-93, and Lys-98 each carry the N6-succinyllysine modification. Cys-217 serves as a coordination point for Zn(2+). N6-succinyllysine occurs at positions 232 and 241. Zn(2+) contacts are provided by Cys-299 and Cys-300. Position 330 is a phosphoserine (Ser-330). An N6-succinyllysine mark is found at Lys-340 and Lys-377.

In terms of assembly, homotetramer. The cofactor is Zn(2+).

It is found in the cytoplasm. It localises to the cytosol. The protein localises to the nucleus. The catalysed reaction is L-homocysteine + glycine betaine = N,N-dimethylglycine + L-methionine. The protein operates within amine and polyamine degradation; betaine degradation; sarcosine from betaine: step 1/2. It functions in the pathway amino-acid biosynthesis; L-methionine biosynthesis via de novo pathway; L-methionine from L-homocysteine (BhmT route): step 1/1. Involved in the regulation of homocysteine metabolism. Converts betaine and homocysteine to dimethylglycine and methionine, respectively. This reaction is also required for the irreversible oxidation of choline. The chain is Betaine--homocysteine S-methyltransferase 1 (Bhmt) from Mus musculus (Mouse).